We begin with the raw amino-acid sequence, 490 residues long: Myocilin (490 aa).

Positions 1 to 18 (MPATQLLLLACLVWGLGA) are cleaved as a signal peptide. A glycan (N-linked (GlcNAc...) asparagine) is linked at asparagine 43. Residues 52 to 169 (QAMSAIQDLQ…SQEVARLRRG (118 aa)) are a coiled coil. Positions 146–157 (REENEDLARRLD) are enriched in basic and acidic residues. The segment at 146 to 188 (REENEDLARRLDSSSQEVARLRRGQCPQARGTPQDVPSGSREV) is disordered. The Olfactomedin-like domain maps to 230-489 (GCGELVWVGE…MVTYDLRLSE (260 aa)). Residues cysteine 231 and cysteine 419 are joined by a disulfide bond. Ca(2+)-binding residues include aspartate 366, asparagine 414, alanine 415, valine 463, and aspartate 464. The Microbody targeting signal signature appears at 488-490 (SEM).

As to quaternary structure, homodimer (via N-terminus). Can also form higher oligomers. Interacts with OLFM3, FN1, NRCAM, GLDN and NFASC. Interacts (via N-terminus) with MYL2. Interacts with SFRP1, FRZB, FZD7, FZD10, FZD1 and WIF1; regulates Wnt signaling. Interacts with SNTA1; regulates muscle hypertrophy. Interacts with ERBB2 and ERBB3; activates ERBB2-ERBB3 signaling pathway. Interacts with SNCG; affects its secretion and its aggregation. In terms of processing, palmitoylated. Undergoes a calcium-dependent proteolytic cleavage at Arg-212 by CAPN2 in the endoplasmic reticulum. The result is the production of two fragments, one of 35 kDa containing the C-terminal olfactomedin-like domain, and another of 20 kDa containing the N-terminal leucine zipper-like domain. Post-translationally, glycosylated. As to expression, expressed in optic nerve head, ciliary body and retina.

The protein resides in the secreted. The protein localises to the golgi apparatus. It is found in the cytoplasmic vesicle. It localises to the extracellular space. Its subcellular location is the extracellular matrix. The protein resides in the extracellular exosome. The protein localises to the mitochondrion. It is found in the mitochondrion intermembrane space. It localises to the mitochondrion inner membrane. Its subcellular location is the mitochondrion outer membrane. The protein resides in the rough endoplasmic reticulum. The protein localises to the cell projection. It is found in the cilium. It localises to the endoplasmic reticulum. Its function is as follows. Secreted glycoprotein regulating the activation of different signaling pathways in adjacent cells to control different processes including cell adhesion, cell-matrix adhesion, cytoskeleton organization and cell migration. Promotes substrate adhesion, spreading and formation of focal contacts. Negatively regulates cell-matrix adhesion and stress fiber assembly through Rho protein signal transduction. Modulates the organization of actin cytoskeleton by stimulating the formation of stress fibers through interactions with components of Wnt signaling pathways. Promotes cell migration through activation of PTK2 and the downstream phosphatidylinositol 3-kinase signaling. Plays a role in bone formation and promotes osteoblast differentiation in a dose-dependent manner through mitogen-activated protein kinase signaling. Mediates myelination in the peripheral nervous system through ERBB2/ERBB3 signaling. Plays a role as a regulator of muscle hypertrophy through the components of dystrophin-associated protein complex. Involved in positive regulation of mitochondrial depolarization. Plays a role in neurite outgrowth. May participate in the obstruction of fluid outflow in the trabecular meshwork. The protein is Myocilin (MYOC) of Felis catus (Cat).